The following is a 345-amino-acid chain: MVNKSTTNGVSDPNLENKRTKVTLTNSGVENARGTYYSGAYTSVGYDNSFNLNRFKENFKINILSESANELVFEMIGIDAPIANALRRIMISEIPTMAIEKVYIINNTSILQDEVLAHRLGMIPIKVDPRKFNFKLPNKEYTAEDTLIFQLKVKCEKDSVTGKIINETALSKHLIWVPTQDQEEMFPNEEDRPRPMEDDIPIMKLRPGQVIDIQCYCEKNIGREHIKWSPVCTASYRLQPVISVDKSIKGDKANQLLEKCPKKVFDIEDSGQVVAARPLDCTMCRECIRDPEFEQNVKIERVRDHFIFSIESTGALKSREIFQEAIKIFIEKCNIVEESINKLVN.

Polar residues predominate over residues 1–11 (MVNKSTTNGVS). The disordered stretch occupies residues 1 to 20 (MVNKSTTNGVSDPNLENKRT).

The protein belongs to the archaeal Rpo3/eukaryotic RPB3 RNA polymerase subunit family. Component of the RNA polymerase I (Pol I) and RNA polymerase III (Pol III) complexes consisting of at least 13 and 17 subunits, respectively. Interacts with RPAC19/RPAC2.

It localises to the nucleus. Functionally, DNA-dependent RNA polymerase catalyzes the transcription of DNA into RNA using the four ribonucleoside triphosphates as substrates. Common component of RNA polymerases I and III which synthesize ribosomal RNA precursors and small RNAs, such as 5S rRNA and tRNAs, respectively. RPAC1 is part of the Pol core element with the central large cleft and probably a clamp element that moves to open and close the cleft. The chain is DNA-directed RNA polymerases I and III subunit rpac1 (polr1c) from Dictyostelium discoideum (Social amoeba).